Here is a 434-residue protein sequence, read N- to C-terminus: Eukaryotic peptide chain release factor subunit 1-2 (434 aa).

Ala-2 is subject to N-acetylalanine.

The protein belongs to the eukaryotic release factor 1 family. As to quaternary structure, heterodimer of two subunits, one of which binds GTP.

The protein localises to the cytoplasm. Directs the termination of nascent peptide synthesis (translation) in response to the termination codons UAA, UAG and UGA. Modulates plant growth and development. This Arabidopsis thaliana (Mouse-ear cress) protein is Eukaryotic peptide chain release factor subunit 1-2.